Reading from the N-terminus, the 173-residue chain is Shikimate kinase 1 (173 aa).

14 to 19 (GAGKST) is an ATP binding site. A Mg(2+)-binding site is contributed by serine 18. Positions 36, 60, and 82 each coordinate substrate. Arginine 120 lines the ATP pocket. Arginine 140 lines the substrate pocket. Glutamine 157 is a binding site for ATP.

The protein belongs to the shikimate kinase family. Monomer. Requires Mg(2+) as cofactor.

The protein localises to the cytoplasm. The catalysed reaction is shikimate + ATP = 3-phosphoshikimate + ADP + H(+). It participates in metabolic intermediate biosynthesis; chorismate biosynthesis; chorismate from D-erythrose 4-phosphate and phosphoenolpyruvate: step 5/7. In terms of biological role, catalyzes the specific phosphorylation of the 3-hydroxyl group of shikimic acid using ATP as a cosubstrate. The polypeptide is Shikimate kinase 1 (Erwinia tasmaniensis (strain DSM 17950 / CFBP 7177 / CIP 109463 / NCPPB 4357 / Et1/99)).